A 504-amino-acid chain; its full sequence is Cytochrome P450 4A25 (504 aa).

The next 2 helical transmembrane spans lie at Leu6–Leu26 and Ala110–Gly130. Cys451 is a heme binding site.

The protein belongs to the cytochrome P450 family. The cofactor is heme.

The protein localises to the endoplasmic reticulum membrane. The enzyme catalyses an omega-methyl-long-chain fatty acid + reduced [NADPH--hemoprotein reductase] + O2 = an omega-hydroxy-long-chain fatty acid + oxidized [NADPH--hemoprotein reductase] + H2O + H(+). Catalyzes the omega- and (omega-1)-hydroxylation of various fatty acids such as laurate and palmitate. Has no activity toward taurochenodeoxycholic acid. This is Cytochrome P450 4A25 (CYP4A25) from Sus scrofa (Pig).